The following is a 291-amino-acid chain: 3-hydroxy-5-phosphonooxypentane-2,4-dione thiolase (291 aa).

K203 acts as the Schiff-base intermediate with substrate in catalysis.

Belongs to the DeoC/FbaB aldolase family. Homodecamer.

The protein localises to the cytoplasm. It carries out the reaction dihydroxyacetone phosphate + acetyl-CoA = 3-hydroxy-2,4-dioxopentyl phosphate + CoA. In terms of biological role, involved in the degradation of phospho-AI-2, thereby terminating induction of the lsr operon and closing the AI-2 signaling cycle. Catalyzes the transfer of an acetyl moiety from 3-hydroxy-5-phosphonooxypentane-2,4-dione to CoA to form glycerone phosphate and acetyl-CoA. The polypeptide is 3-hydroxy-5-phosphonooxypentane-2,4-dione thiolase (Escherichia coli (strain K12 / DH10B)).